The sequence spans 179 residues: MTTSHDRAVLNQILNPLMPTSDSGMGEVHLESDKVDHPGYTLSSQLEREAVRLAESMNVTDAIEKFTEAIQVCPLNPSAYNNRAQAYRLQNSPEKALEDLNESLRLAGPKTKTACQAYVQRASIYRLQGDDEKARADFAAAAELGSSFAKMQMVALNPYAAMCNKMLAEVFEKAKTGDN.

TPR repeat units lie at residues 43–76 (SSQLEREAVRLAESMNVTDAIEKFTEAIQVCPLN), 77–110 (PSAYNNRAQAYRLQNSPEKALEDLNESLRLAGPK), and 115–148 (CQAYVQRASIYRLQGDDEKARADFAAAAELGSSF).

This sequence belongs to the TTC36 family.

The protein is Tetratricopeptide repeat protein 36 of Caenorhabditis briggsae.